The primary structure comprises 283 residues: MYRGRFAPTPSGPLHLGSLVAAVGSYLDAKAHRGEWLVRIEDVDKPRAVPGAADTILTQLEAHGLEWDGSVLYQSQRDSVYQHQLNQLENAQRLYQCDCSRRAIRARSDHYDGYCRNRQPRSTPYALRFINNNPVDTFNDRAHGLLEDHSASVSEDFVLKRRDGLYAYQLAVVVDDIEQGITDIVRGSDLITPSFWQLTLWQYFTGKQPRMMHLPLIMNDDGLKLSKQNHAPSIESSQARNNLFTALDYLGIKPESELRHSPVSEILQQALQSWCKKWHIAGR.

L-glutamate contacts are provided by residues 5–9 (RFAPT) and E41. The 'HIGH' region signature appears at 8-18 (PTPSGPLHLGS). Residues C97, C99, Y111, and C115 each coordinate Zn(2+). Residues Y168 and R186 each coordinate L-glutamate. A 'KMSKS' region motif is present at residues 224–228 (KLSKQ). ATP is bound at residue K227.

It belongs to the class-I aminoacyl-tRNA synthetase family. GluQ subfamily. It depends on Zn(2+) as a cofactor.

Catalyzes the tRNA-independent activation of glutamate in presence of ATP and the subsequent transfer of glutamate onto a tRNA(Asp). Glutamate is transferred on the 2-amino-5-(4,5-dihydroxy-2-cyclopenten-1-yl) moiety of the queuosine in the wobble position of the QUC anticodon. The polypeptide is Glutamyl-Q tRNA(Asp) synthetase (Idiomarina loihiensis (strain ATCC BAA-735 / DSM 15497 / L2-TR)).